Here is a 148-residue protein sequence, read N- to C-terminus: UPF0756 membrane protein Ent638_1667 (148 aa).

Helical transmembrane passes span 14 to 34 (ALGFISHNTTVAISILVLIIV), 51 to 71 (LTIGIIILTIGVMAPIASGTL), 86 to 106 (LIAIAVGVFVSWLGGRGVTLM), and 121 to 141 (VLGVALFRGVPVGPLIAAGLV).

Belongs to the UPF0756 family.

The protein localises to the cell membrane. The polypeptide is UPF0756 membrane protein Ent638_1667 (Enterobacter sp. (strain 638)).